The following is a 217-amino-acid chain: 3,4-dihydroxy-2-butanone 4-phosphate synthase (217 aa).

D-ribulose 5-phosphate contacts are provided by residues 37–38, D42, 150–154, and E174; these read RE and RRGHT. E38 lines the Mg(2+) pocket. H153 is a Mg(2+) binding site.

This sequence belongs to the DHBP synthase family. As to quaternary structure, homodimer. The cofactor is Mg(2+). Mn(2+) serves as cofactor.

The catalysed reaction is D-ribulose 5-phosphate = (2S)-2-hydroxy-3-oxobutyl phosphate + formate + H(+). It functions in the pathway cofactor biosynthesis; riboflavin biosynthesis; 2-hydroxy-3-oxobutyl phosphate from D-ribulose 5-phosphate: step 1/1. Catalyzes the conversion of D-ribulose 5-phosphate to formate and 3,4-dihydroxy-2-butanone 4-phosphate. This is 3,4-dihydroxy-2-butanone 4-phosphate synthase from Yersinia enterocolitica serotype O:8 / biotype 1B (strain NCTC 13174 / 8081).